The following is a 283-amino-acid chain: 4-diphosphocytidyl-2-C-methyl-D-erythritol kinase (283 aa).

Lys12 is a catalytic residue. 94–104 (PAQAGLGGGSS) contributes to the ATP binding site. Residue Asp136 is part of the active site.

This sequence belongs to the GHMP kinase family. IspE subfamily.

It carries out the reaction 4-CDP-2-C-methyl-D-erythritol + ATP = 4-CDP-2-C-methyl-D-erythritol 2-phosphate + ADP + H(+). It functions in the pathway isoprenoid biosynthesis; isopentenyl diphosphate biosynthesis via DXP pathway; isopentenyl diphosphate from 1-deoxy-D-xylulose 5-phosphate: step 3/6. In terms of biological role, catalyzes the phosphorylation of the position 2 hydroxy group of 4-diphosphocytidyl-2C-methyl-D-erythritol. In Acidovorax ebreus (strain TPSY) (Diaphorobacter sp. (strain TPSY)), this protein is 4-diphosphocytidyl-2-C-methyl-D-erythritol kinase.